The following is a 115-amino-acid chain: Succinate dehydrogenase assembly factor 3, mitochondrial (115 aa).

It belongs to the complex I LYR family. SDHAF3 subfamily. Interacts with the iron-sulfur protein subunit within the SDH catalytic dimer.

Its subcellular location is the mitochondrion matrix. In terms of biological role, plays an essential role in the assembly of succinate dehydrogenase (SDH), an enzyme complex (also referred to as respiratory complex II) that is a component of both the tricarboxylic acid (TCA) cycle and the mitochondrial electron transport chain, and which couples the oxidation of succinate to fumarate with the reduction of ubiquinone (coenzyme Q) to ubiquinol. Promotes maturation of the iron-sulfur protein subunit of the SDH catalytic dimer, protecting it from the deleterious effects of oxidants. May act together with SDHAF1. In Nematostella vectensis (Starlet sea anemone), this protein is Succinate dehydrogenase assembly factor 3, mitochondrial (acn9).